Reading from the N-terminus, the 29-residue chain is Dander allergen Equ c 2.0101 (29 aa).

This sequence belongs to the calycin superfamily. Lipocalin family.

The protein localises to the secreted. The protein is Dander allergen Equ c 2.0101 of Equus caballus (Horse).